The primary structure comprises 58 residues: Large ribosomal subunit protein uL30 (58 aa).

This sequence belongs to the universal ribosomal protein uL30 family. In terms of assembly, part of the 50S ribosomal subunit.

This is Large ribosomal subunit protein uL30 from Zymomonas mobilis subsp. mobilis (strain ATCC 31821 / ZM4 / CP4).